A 564-amino-acid polypeptide reads, in one-letter code: Ribulokinase (564 aa).

The protein belongs to the ribulokinase family.

The catalysed reaction is D-ribulose + ATP = D-ribulose 5-phosphate + ADP + H(+). It catalyses the reaction L-ribulose + ATP = L-ribulose 5-phosphate + ADP + H(+). The protein operates within carbohydrate degradation; L-arabinose degradation via L-ribulose; D-xylulose 5-phosphate from L-arabinose (bacterial route): step 2/3. The polypeptide is Ribulokinase (Geobacillus thermodenitrificans (strain NG80-2)).